Reading from the N-terminus, the 397-residue chain is MGKAKFERGKPHVNIGTIGHIDHGKTTLTAAITKIAGLAGNGDYVAFDEIDKAPEEKERGITIATAHVEYETEARHYAHVDCPGHADYIKNMITGAAQMDGAILVVAATDGPMPQTREHILLARQVGVPGIVVFLNKCDMVDDEELLELVEMEVRELLSSYDFPGDDLPVIQGSALKALECESADEDAAKPILDLLAACDSYIEEPERDIDKPFLMPIEDVFSISGRGTVVTGRVERGVIKVGEEVEIVGIRDTAKTTCTGVEMFRKLLDQGQAGDNVGVLLRGTKRDEVERGQVLSAPGSINPHTKFKAEVYVLSKDEGGRHTPFFSGYRPQFYFRTTDITGVVTLDEGVEMVMPGDNATFNVEMINPIAMDPGLRFAIREGGRTVGAGVVTEILE.

In terms of domain architecture, tr-type G spans 10 to 207 (KPHVNIGTIG…ACDSYIEEPE (198 aa)). Positions 19-26 (GHIDHGKT) are G1. 19-26 (GHIDHGKT) contributes to the GTP binding site. Thr26 provides a ligand contact to Mg(2+). A G2 region spans residues 60–64 (GITIA). The tract at residues 81–84 (DCPG) is G3. Residues 81–85 (DCPGH) and 136–139 (NKCD) contribute to the GTP site. A G4 region spans residues 136-139 (NKCD). The G5 stretch occupies residues 174–176 (SAL).

Belongs to the TRAFAC class translation factor GTPase superfamily. Classic translation factor GTPase family. EF-Tu/EF-1A subfamily. As to quaternary structure, monomer.

The protein localises to the cytoplasm. The catalysed reaction is GTP + H2O = GDP + phosphate + H(+). Its function is as follows. GTP hydrolase that promotes the GTP-dependent binding of aminoacyl-tRNA to the A-site of ribosomes during protein biosynthesis. This is Elongation factor Tu from Maridesulfovibrio salexigens (strain ATCC 14822 / DSM 2638 / NCIMB 8403 / VKM B-1763) (Desulfovibrio salexigens).